The chain runs to 405 residues: Probable tRNA sulfurtransferase (405 aa).

One can recognise a THUMP domain in the interval 60–165 (AEVDKRLKKV…QDAVYISNQL (106 aa)). ATP contacts are provided by residues 183–184 (ML), 208–209 (HF), Arg-265, Gly-287, and Gln-296.

It belongs to the ThiI family.

Its subcellular location is the cytoplasm. The enzyme catalyses [ThiI sulfur-carrier protein]-S-sulfanyl-L-cysteine + a uridine in tRNA + 2 reduced [2Fe-2S]-[ferredoxin] + ATP + H(+) = [ThiI sulfur-carrier protein]-L-cysteine + a 4-thiouridine in tRNA + 2 oxidized [2Fe-2S]-[ferredoxin] + AMP + diphosphate. It catalyses the reaction [ThiS sulfur-carrier protein]-C-terminal Gly-Gly-AMP + S-sulfanyl-L-cysteinyl-[cysteine desulfurase] + AH2 = [ThiS sulfur-carrier protein]-C-terminal-Gly-aminoethanethioate + L-cysteinyl-[cysteine desulfurase] + A + AMP + 2 H(+). Its pathway is cofactor biosynthesis; thiamine diphosphate biosynthesis. Catalyzes the ATP-dependent transfer of a sulfur to tRNA to produce 4-thiouridine in position 8 of tRNAs, which functions as a near-UV photosensor. Also catalyzes the transfer of sulfur to the sulfur carrier protein ThiS, forming ThiS-thiocarboxylate. This is a step in the synthesis of thiazole, in the thiamine biosynthesis pathway. The sulfur is donated as persulfide by IscS. This is Probable tRNA sulfurtransferase from Lactobacillus helveticus (strain DPC 4571).